The following is a 101-amino-acid chain: Small ribosomal subunit protein uS14 (101 aa).

It belongs to the universal ribosomal protein uS14 family. Part of the 30S ribosomal subunit. Contacts proteins S3 and S10.

Binds 16S rRNA, required for the assembly of 30S particles and may also be responsible for determining the conformation of the 16S rRNA at the A site. The sequence is that of Small ribosomal subunit protein uS14 from Chlamydia abortus (strain DSM 27085 / S26/3) (Chlamydophila abortus).